A 275-amino-acid polypeptide reads, in one-letter code: Large ribosomal subunit protein uL2c (275 aa).

The segment at 222–258 (GSAMNPVDHPHGGGEGRAPIGRARPVSPWGRPALGAK) is disordered.

The protein belongs to the universal ribosomal protein uL2 family. As to quaternary structure, part of the 50S ribosomal subunit.

The protein resides in the plastid. It is found in the chloroplast. The chain is Large ribosomal subunit protein uL2c (rpl2) from Chlorella vulgaris (Green alga).